The chain runs to 262 residues: Indole-3-glycerol phosphate synthase (262 aa).

It belongs to the TrpC family.

The enzyme catalyses 1-(2-carboxyphenylamino)-1-deoxy-D-ribulose 5-phosphate + H(+) = (1S,2R)-1-C-(indol-3-yl)glycerol 3-phosphate + CO2 + H2O. It functions in the pathway amino-acid biosynthesis; L-tryptophan biosynthesis; L-tryptophan from chorismate: step 4/5. This Nitratiruptor sp. (strain SB155-2) protein is Indole-3-glycerol phosphate synthase.